The sequence spans 207 residues: Large ribosomal subunit protein uL4 (207 aa).

A disordered region spans residues 43–80 (RRRSGTAKSKGRSEVSGSTRKLYRQKGTGNARSGSVKS). Over residues 69-78 (GTGNARSGSV) the composition is skewed to polar residues.

It belongs to the universal ribosomal protein uL4 family. Part of the 50S ribosomal subunit.

Functionally, one of the primary rRNA binding proteins, this protein initially binds near the 5'-end of the 23S rRNA. It is important during the early stages of 50S assembly. It makes multiple contacts with different domains of the 23S rRNA in the assembled 50S subunit and ribosome. Forms part of the polypeptide exit tunnel. This is Large ribosomal subunit protein uL4 from Desulforapulum autotrophicum (strain ATCC 43914 / DSM 3382 / VKM B-1955 / HRM2) (Desulfobacterium autotrophicum).